Consider the following 510-residue polypeptide: NAD(P)H-quinone oxidoreductase subunit 2 A, chloroplastic (510 aa).

A run of 14 helical transmembrane segments spans residues 31–51 (FIFP…IDLT), 59–79 (WFYF…LFRW), 99–119 (IFQF…VEYI), 124–144 (MAIT…MFLC), 149–169 (LITI…LSGY), 184–204 (LLMG…LYGL), 229–249 (ISIA…LAPF), 261–281 (PTPV…ALAT), 295–315 (WHLL…LLAI), 323–343 (MLAY…IVGD), 354–374 (YMLF…LFGL), 395–415 (ALSL…AGFF), 418–438 (LYLF…IGLL), and 484–504 (MTVC…ILAI).

Belongs to the complex I subunit 2 family. NDH is composed of at least 16 different subunits, 5 of which are encoded in the nucleus.

The protein resides in the plastid. The protein localises to the chloroplast thylakoid membrane. It catalyses the reaction a plastoquinone + NADH + (n+1) H(+)(in) = a plastoquinol + NAD(+) + n H(+)(out). The enzyme catalyses a plastoquinone + NADPH + (n+1) H(+)(in) = a plastoquinol + NADP(+) + n H(+)(out). NDH shuttles electrons from NAD(P)H:plastoquinone, via FMN and iron-sulfur (Fe-S) centers, to quinones in the photosynthetic chain and possibly in a chloroplast respiratory chain. The immediate electron acceptor for the enzyme in this species is believed to be plastoquinone. Couples the redox reaction to proton translocation, and thus conserves the redox energy in a proton gradient. The sequence is that of NAD(P)H-quinone oxidoreductase subunit 2 A, chloroplastic from Oryza sativa subsp. japonica (Rice).